We begin with the raw amino-acid sequence, 117 residues long: Non-specific lipid-transfer protein 1 (117 aa).

A signal peptide spans 1–25 (MAGLVKLSCLVLACMIVAGPIATNA). 4 cysteine pairs are disulfide-bonded: cysteine 29-cysteine 76, cysteine 39-cysteine 53, cysteine 54-cysteine 99, and cysteine 74-cysteine 113.

Belongs to the plant LTP family.

In terms of biological role, plant non-specific lipid-transfer proteins transfer phospholipids as well as galactolipids across membranes. May play a role in wax or cutin deposition in the cell walls of expanding epidermal cells and certain secretory tissues. This is Non-specific lipid-transfer protein 1 (LTP1) from Brassica napus (Rape).